Here is a 278-residue protein sequence, read N- to C-terminus: Indole-3-glycerol phosphate synthase (278 aa).

Belongs to the TrpC family.

The enzyme catalyses 1-(2-carboxyphenylamino)-1-deoxy-D-ribulose 5-phosphate + H(+) = (1S,2R)-1-C-(indol-3-yl)glycerol 3-phosphate + CO2 + H2O. It participates in amino-acid biosynthesis; L-tryptophan biosynthesis; L-tryptophan from chorismate: step 4/5. The chain is Indole-3-glycerol phosphate synthase from Pseudomonas fluorescens (strain ATCC BAA-477 / NRRL B-23932 / Pf-5).